The sequence spans 293 residues: Glutamyl-Q tRNA(Asp) synthetase (293 aa).

L-glutamate is bound by residues 8 to 12 (RFAPT) and glutamate 44. The 'HIGH' region motif lies at 11–21 (PTPSGYLHFGS). Residues cysteine 100, cysteine 102, tyrosine 114, and cysteine 118 each contribute to the Zn(2+) site. Tyrosine 171 and arginine 189 together coordinate L-glutamate. Positions 227–231 (KLGKS) match the 'KMSKS' region motif. Position 230 (lysine 230) interacts with ATP.

It belongs to the class-I aminoacyl-tRNA synthetase family. GluQ subfamily. The cofactor is Zn(2+).

In terms of biological role, catalyzes the tRNA-independent activation of glutamate in presence of ATP and the subsequent transfer of glutamate onto a tRNA(Asp). Glutamate is transferred on the 2-amino-5-(4,5-dihydroxy-2-cyclopenten-1-yl) moiety of the queuosine in the wobble position of the QUC anticodon. The polypeptide is Glutamyl-Q tRNA(Asp) synthetase (Pseudomonas paraeruginosa (strain DSM 24068 / PA7) (Pseudomonas aeruginosa (strain PA7))).